A 382-amino-acid chain; its full sequence is D-galactonate dehydratase (382 aa).

Residue D183 coordinates Mg(2+). H185 functions as the Proton donor in the catalytic mechanism. Residues E209 and E235 each contribute to the Mg(2+) site. The active-site Proton acceptor is H285.

This sequence belongs to the mandelate racemase/muconate lactonizing enzyme family. GalD subfamily. It depends on Mg(2+) as a cofactor.

It catalyses the reaction D-galactonate = 2-dehydro-3-deoxy-D-galactonate + H2O. It functions in the pathway carbohydrate acid metabolism; D-galactonate degradation; D-glyceraldehyde 3-phosphate and pyruvate from D-galactonate: step 1/3. Its function is as follows. Catalyzes the dehydration of D-galactonate to 2-keto-3-deoxy-D-galactonate. This Cronobacter sakazakii (strain ATCC BAA-894) (Enterobacter sakazakii) protein is D-galactonate dehydratase.